Here is a 202-residue protein sequence, read N- to C-terminus: Small ribosomal subunit protein uS4 (202 aa).

Residues 22–43 (TRKSARRAYPPGQHGQNRKKRS) form a disordered region. One can recognise an S4 RNA-binding domain in the interval 90-152 (MRLDNTVFRL…AQSRKLVEAN (63 aa)).

It belongs to the universal ribosomal protein uS4 family. In terms of assembly, part of the 30S ribosomal subunit. Contacts protein S5. The interaction surface between S4 and S5 is involved in control of translational fidelity.

One of the primary rRNA binding proteins, it binds directly to 16S rRNA where it nucleates assembly of the body of the 30S subunit. Its function is as follows. With S5 and S12 plays an important role in translational accuracy. The sequence is that of Small ribosomal subunit protein uS4 from Nostoc punctiforme (strain ATCC 29133 / PCC 73102).